A 66-amino-acid polypeptide reads, in one-letter code: DNA-directed RNA polymerase subunit omega (66 aa).

The protein belongs to the RNA polymerase subunit omega family. The RNAP catalytic core consists of 2 alpha, 1 beta, 1 beta' and 1 omega subunit. When a sigma factor is associated with the core the holoenzyme is formed, which can initiate transcription.

It carries out the reaction RNA(n) + a ribonucleoside 5'-triphosphate = RNA(n+1) + diphosphate. Its function is as follows. Promotes RNA polymerase assembly. Latches the N- and C-terminal regions of the beta' subunit thereby facilitating its interaction with the beta and alpha subunits. The protein is DNA-directed RNA polymerase subunit omega of Geobacillus kaustophilus (strain HTA426).